The sequence spans 632 residues: Chaperone protein HtpG (632 aa).

The tract at residues 1-339 (MTQQTMSFQA…SSDLPLNVSR (339 aa)) is a; substrate-binding. Residues 340–559 (EILQESRDVK…DNDMSGYLQR (220 aa)) are b. The segment at 560–632 (MLKAAGQSAP…TNALLLSRAA (73 aa)) is c.

This sequence belongs to the heat shock protein 90 family. Homodimer.

It is found in the cytoplasm. Molecular chaperone. Has ATPase activity. This chain is Chaperone protein HtpG, found in Burkholderia pseudomallei (strain 1106a).